The chain runs to 502 residues: MAQNESVDVVLVGAGIMSATLAVLLKELDPTLKLEVVEAMDSGAAESSNPWNNAGTGHAGLCELNYTPQAADGSIDIKKAVHINTQFEVSRQFWAYLTKKGNFGSARAFINPVPHLSYVEGDKGVSFLKKRFELLKQHHAFAEMEYTEDKAVMNDWMPLMMPGRPADQHIAATRVAKGTDVNFGALTNKLLKLLGDSPDAQVKYSKKVVGLRRNGSGWTVSIKDVNSGGSREVDARFVFLGAGGAALPLLQLSGIPESKGFGGFPVSGQWLRCDNPEIVKQHQAKVYSQAAVGAPPMSVPHLDTRVVDGKTSLLFGPYAGFTTKFLKHGSLMDLPLSVRMGNIGPMLAVARDNMDLTKYLVSEVMQSMEQRLEALRRFYPQAKAEDWRLEVAGQRVQIIKKDPKKGGVLQFGTELVSAQDGSLAALLGASPGASVTVSIMLELIERCFPEQAKGAWAAKLKEIFPAREKTLATDAALYHKISADNDAALDLAESSPAAKHYA.

Belongs to the MQO family. The cofactor is FAD.

The enzyme catalyses (S)-malate + a quinone = a quinol + oxaloacetate. Its pathway is carbohydrate metabolism; tricarboxylic acid cycle; oxaloacetate from (S)-malate (quinone route): step 1/1. The sequence is that of Probable malate:quinone oxidoreductase 1 from Pseudomonas putida (strain ATCC 47054 / DSM 6125 / CFBP 8728 / NCIMB 11950 / KT2440).